A 190-amino-acid polypeptide reads, in one-letter code: MGRDIYKDETLTIPKGVTVDIKARNVTVTGPRGTLKQNLRHVDIEMKKQGNTIKFIVWHGSRKHNACIRSVYSIINNMIIGVTQGFRYKMRLVYAHFPININLTENGTVVEIRNFLGERITRVIKCLPGVTVSISSAVKDEIILEGNSLENVSQSAANIKQICNVRNKDIRKFLDGIYVSERGNIEELEE.

It belongs to the universal ribosomal protein uL6 family. Component of the large ribosomal subunit (LSU). Mature yeast ribosomes consist of a small (40S) and a large (60S) subunit. The 40S small subunit contains 1 molecule of ribosomal RNA (18S rRNA) and at least 33 different proteins. The large 60S subunit contains 3 rRNA molecules (25S, 5.8S and 5S rRNA) and at least 46 different proteins. uL6 lines the binding pocket for eukaryotic elongation factor 2 (eEF2).

The protein localises to the cytoplasm. It localises to the nucleus. Its function is as follows. Component of the ribosome, a large ribonucleoprotein complex responsible for the synthesis of proteins in the cell. The small ribosomal subunit (SSU) binds messenger RNAs (mRNAs) and translates the encoded message by selecting cognate aminoacyl-transfer RNA (tRNA) molecules. The large subunit (LSU) contains the ribosomal catalytic site termed the peptidyl transferase center (PTC), which catalyzes the formation of peptide bonds, thereby polymerizing the amino acids delivered by tRNAs into a polypeptide chain. The nascent polypeptides leave the ribosome through a tunnel in the LSU and interact with protein factors that function in enzymatic processing, targeting, and the membrane insertion of nascent chains at the exit of the ribosomal tunnel. This is Large ribosomal subunit protein uL6A (rpl901) from Schizosaccharomyces pombe (strain 972 / ATCC 24843) (Fission yeast).